A 372-amino-acid chain; its full sequence is Cell division protein FtsZ 1 (372 aa).

Residues Gly-51 to Asn-55, Gly-138 to Gly-140, Glu-169, Arg-173, and Asp-216 each bind GTP. Residues Gln-351 to Leu-372 form a disordered region. Acidic residues predominate over residues Glu-353–Val-362.

It belongs to the FtsZ family. In terms of assembly, homodimer. Polymerizes to form a dynamic ring structure in a strictly GTP-dependent manner. Interacts directly with several other division proteins.

The protein localises to the cytoplasm. In terms of biological role, essential cell division protein that forms a contractile ring structure (Z ring) at the future cell division site. The regulation of the ring assembly controls the timing and the location of cell division. One of the functions of the FtsZ ring is to recruit other cell division proteins to the septum to produce a new cell wall between the dividing cells. Binds GTP and shows GTPase activity. The protein is Cell division protein FtsZ 1 of Pyrococcus abyssi (strain GE5 / Orsay).